The chain runs to 511 residues: uncharacterized protein (511 aa).

Helical transmembrane passes span 33 to 53, 59 to 79, and 97 to 117; these read IICMIIAYVFILPAGIVLAMA, IPVQIVYVILTLIGYIFAHIS, and VGRFFMWITFLIAIVGITTSI. Phosphoserine is present on residues Ser-147, Ser-161, and Ser-162. Residues 157–180 are disordered; sequence REGNSSDEYLPPQSSRRDVSSEKP. 7 helical membrane-spanning segments follow: residues 216–236, 249–269, 297–317, 332–352, 412–432, 449–469, and 483–503; these read LWLYVGFFESCTGIVLLAGIF, IKGAIFLWYGILSFGEYLGAF, MVESFLLFAYGVSNVWLEHLG, SLAFMLWWAGLCGILVESKVV, VLWGRLLAAAAIARICTYIML, IITSFCLICGGAMFMASSYDV, and IMNISVAFTCIVMGLEVMFLI.

The protein to yeast YCR061W.

It is found in the endoplasmic reticulum membrane. This is an uncharacterized protein from Schizosaccharomyces pombe (strain 972 / ATCC 24843) (Fission yeast).